We begin with the raw amino-acid sequence, 656 residues long: Macrolide export ATP-binding/permease protein MacB (656 aa).

Positions 6–244 (LEVSACYRSF…VKAQVDMSLA (239 aa)) constitute an ABC transporter domain. An ATP-binding site is contributed by 42–49 (GASGSGKS). The next 4 helical transmembrane spans lie at 277 to 297 (FLTMLGIIIGIASVVSVVALG), 531 to 551 (LLISAIAVISLVVGGIGVMNI), 586 to 606 (LVCLCGGALGVALAYLIGVVF), and 621 to 641 (SIVAAFACSTLIGVLFGFLPA).

The protein belongs to the ABC transporter superfamily. Macrolide exporter (TC 3.A.1.122) family. As to quaternary structure, homodimer. Part of the tripartite efflux system MacAB-TolC, which is composed of an inner membrane transporter, MacB, a periplasmic membrane fusion protein, MacA, and an outer membrane component, TolC. The complex forms a large protein conduit and can translocate molecules across both the inner and outer membranes. Interacts with MacA.

The protein resides in the cell inner membrane. Its function is as follows. Part of the tripartite efflux system MacAB-TolC. MacB is a non-canonical ABC transporter that contains transmembrane domains (TMD), which form a pore in the inner membrane, and an ATP-binding domain (NBD), which is responsible for energy generation. Confers resistance against macrolides. The chain is Macrolide export ATP-binding/permease protein MacB from Shewanella oneidensis (strain ATCC 700550 / JCM 31522 / CIP 106686 / LMG 19005 / NCIMB 14063 / MR-1).